Consider the following 267-residue polypeptide: Undecaprenyl-diphosphatase (267 aa).

The next 7 helical transmembrane spans lie at 1 to 21 (MTLW…FLPI), 39 to 59 (AGVA…LFYY), 85 to 105 (AKLG…GFMV), 117 to 137 (LLIA…DFWG), 189 to 209 (FSFL…LWKL), 220 to 240 (LIAL…ALFI), and 246 to 266 (VGMM…FFVF).

It belongs to the UppP family.

The protein resides in the cell inner membrane. It carries out the reaction di-trans,octa-cis-undecaprenyl diphosphate + H2O = di-trans,octa-cis-undecaprenyl phosphate + phosphate + H(+). In terms of biological role, catalyzes the dephosphorylation of undecaprenyl diphosphate (UPP). Confers resistance to bacitracin. The chain is Undecaprenyl-diphosphatase from Dichelobacter nodosus (strain VCS1703A).